Consider the following 71-residue polypeptide: Putative RNA-binding regulatory peptide (71 aa).

In terms of assembly, interacts with IGF2BP1 (via KH3 and KH4 domains); the interaction results in increased binding of IGF2BP1 to N6-methyladenosine (m6A)-containing mRNAs. In terms of tissue distribution, detected in colon (at protein level).

Enhances binding of IGF2BP1 to N6-methyladenosine (m6A)-containing mRNAs, thereby contributing to increased mRNA stability. Also increases the interaction of IGF2BP1 with RNA stabilizers ELAVL1/HUR, MATR3 and PABPC1, and increases the interaction of RNA stabilizers ELAVL1/HUR, MATR3 and PABPC1 with m6A-containing mRNAs. Contributes to MYC stability by enhancing binding of IGF2BP1 to m6A-containing MYC mRNAs and increasing recruitment of RNA stabilizing proteins to m6A-containing MYC mRNAs. In Homo sapiens (Human), this protein is Putative RNA-binding regulatory peptide.